Here is a 761-residue protein sequence, read N- to C-terminus: Xaa-Pro dipeptidyl-peptidase (761 aa).

Residues Ser347, Asp467, and His497 each act as charge relay system in the active site.

It belongs to the peptidase S15 family. In terms of assembly, homodimer.

The protein localises to the cytoplasm. It catalyses the reaction Hydrolyzes Xaa-Pro-|- bonds to release unblocked, N-terminal dipeptides from substrates including Ala-Pro-|-p-nitroanilide and (sequentially) Tyr-Pro-|-Phe-Pro-|-Gly-Pro-|-Ile.. In terms of biological role, removes N-terminal dipeptides sequentially from polypeptides having unsubstituted N-termini provided that the penultimate residue is proline. This is Xaa-Pro dipeptidyl-peptidase from Streptococcus agalactiae serotype V (strain ATCC BAA-611 / 2603 V/R).